A 216-amino-acid polypeptide reads, in one-letter code: Guanylate kinase (216 aa).

Residues 12-191 (GLLFVISSPS…CVKQVKNILT (180 aa)) enclose the Guanylate kinase-like domain. An ATP-binding site is contributed by 19–26 (SPSGAGKS).

It belongs to the guanylate kinase family.

The protein resides in the cytoplasm. It carries out the reaction GMP + ATP = GDP + ADP. Functionally, essential for recycling GMP and indirectly, cGMP. The sequence is that of Guanylate kinase from Zymomonas mobilis subsp. mobilis (strain ATCC 31821 / ZM4 / CP4).